Here is a 252-residue protein sequence, read N- to C-terminus: D-aminoacyl-tRNA deacylase (252 aa).

It belongs to the DtdA deacylase family. As to quaternary structure, monomer. Zn(2+) is required as a cofactor.

The enzyme catalyses a D-aminoacyl-tRNA + H2O = a tRNA + a D-alpha-amino acid + H(+). The catalysed reaction is glycyl-tRNA(Ala) + H2O = tRNA(Ala) + glycine + H(+). In terms of biological role, D-aminoacyl-tRNA deacylase with broad substrate specificity. By recycling D-aminoacyl-tRNA to D-amino acids and free tRNA molecules, this enzyme counteracts the toxicity associated with the formation of D-aminoacyl-tRNA entities in vivo. This is D-aminoacyl-tRNA deacylase from Pyrobaculum neutrophilum (strain DSM 2338 / JCM 9278 / NBRC 100436 / V24Sta) (Thermoproteus neutrophilus).